Here is a 422-residue protein sequence, read N- to C-terminus: Serine--tRNA ligase (422 aa).

Residue 230-232 (TAE) coordinates L-serine. 261–263 (RAE) is a binding site for ATP. Glu284 serves as a coordination point for L-serine. 348-351 (EISS) lines the ATP pocket. Position 383 (Ser383) interacts with L-serine.

It belongs to the class-II aminoacyl-tRNA synthetase family. Type-1 seryl-tRNA synthetase subfamily. In terms of assembly, homodimer. The tRNA molecule binds across the dimer.

The protein resides in the cytoplasm. It catalyses the reaction tRNA(Ser) + L-serine + ATP = L-seryl-tRNA(Ser) + AMP + diphosphate + H(+). It carries out the reaction tRNA(Sec) + L-serine + ATP = L-seryl-tRNA(Sec) + AMP + diphosphate + H(+). It participates in aminoacyl-tRNA biosynthesis; selenocysteinyl-tRNA(Sec) biosynthesis; L-seryl-tRNA(Sec) from L-serine and tRNA(Sec): step 1/1. Functionally, catalyzes the attachment of serine to tRNA(Ser). Is also able to aminoacylate tRNA(Sec) with serine, to form the misacylated tRNA L-seryl-tRNA(Sec), which will be further converted into selenocysteinyl-tRNA(Sec). In Pelotomaculum thermopropionicum (strain DSM 13744 / JCM 10971 / SI), this protein is Serine--tRNA ligase.